The chain runs to 181 residues: Sodium/potassium-transporting ATPase subunit beta-1-interacting protein 3 (181 aa).

Transmembrane regions (helical) follow at residues 5–22 (TGRCTLIFICTLQMLVAL), 35–55 (APILGNFLHIIVVILGLFGTI), 62–82 (IVAYTIWTAFWVAWNVFIICF), and 151–171 (AVQILLSLIGFVYACYVISVI).

It belongs to the NKAIN family. In terms of assembly, interacts with atp1b1 C-terminus.

Its subcellular location is the cell membrane. The polypeptide is Sodium/potassium-transporting ATPase subunit beta-1-interacting protein 3 (nkain3) (Xenopus tropicalis (Western clawed frog)).